The following is a 514-amino-acid chain: Putative thymidine phosphorylase (514 aa).

This sequence belongs to the thymidine/pyrimidine-nucleoside phosphorylase family. Type 2 subfamily.

It catalyses the reaction thymidine + phosphate = 2-deoxy-alpha-D-ribose 1-phosphate + thymine. The polypeptide is Putative thymidine phosphorylase (Rhodopseudomonas palustris (strain ATCC BAA-98 / CGA009)).